Here is a 509-residue protein sequence, read N- to C-terminus: MAKWLNKYFSLGNSKTKSPPQPPRPDYREQRRRGERPSQPPQAVPQASSAASASCGPATASCFSASSGSLPDDSGSTSDLIRAYRAQKERDFEDPYNGPGSSLRKLRAMCRLDYCGGSGEPGGVQRAFSASSASGAAGCCCASSGAGAAASSSSSSGSPHLYRSSSERRPATPAEVRYISPKHRLIKVESAAGGGAGDPLGGACAGGRTWSPTACGGKKLLNKCAASAAEESGAGKKDKVTIADDYSDPFDAKNDLKSKAGKGESAGYMEPYEAQRIMTEFQRQESVRSQHKGIQLYDTPYEPEGQSVDSDSESTVSPRLRESKLPQDDDRPADEYDQPWEWNRVTIPALAAQFNGNEKRQSSPSPSRDRRRQLRAPGGGFKPIKHGSPEFCGILGERVDPAVPLEKQIWYHGAISRGDAENLLRLCKECSYLVRNSQTSKHDYSLSLRSNQGFMHMKLAKTKEKYVLGQNSPPFDSVPEVIHYYTTRKLPIKGAEHLSLLYPVAVRTL.

Disordered stretches follow at residues 1 to 103 and 144 to 178; these read MAKW…GSSL and SGAGAAASSSSSSGSPHLYRSSSERRPATPAEVRY. The segment at 1–410 is mediates interaction with LAT, PTK2/FAK1, JAK1 and JAK3; the sequence is MAKWLNKYFS…PAVPLEKQIW (410 aa). Positions 44–61 are enriched in low complexity; that stretch reads VPQASSAASASCGPATAS. Residues 62–79 are compositionally biased toward polar residues; sequence CFSASSGSLPDDSGSTSD. Ser102 carries the phosphoserine modification. The segment covering 144-158 has biased composition (low complexity); that stretch reads SGAGAAASSSSSSGS. A Glycyl lysine isopeptide (Lys-Gly) (interchain with G-Cter in SUMO2) cross-link involves residue Lys187. Residues 229-385 form a disordered region; that stretch reads AEESGAGKKD…APGGGFKPIK (157 aa). 2 stretches are compositionally biased toward basic and acidic residues: residues 233–242 and 250–262; these read GAGKKDKVTI and FDAKNDLKSKAGK. 2 positions are modified to phosphoserine: Ser307 and Ser317. A compositionally biased stretch (polar residues) spans 307 to 317; sequence SVDSDSESTVS. Positions 319–334 are enriched in basic and acidic residues; that stretch reads RLRESKLPQDDDRPAD. Residue Ser388 is modified to Phosphoserine. The 95-residue stretch at 410–504 folds into the SH2 domain; it reads WYHGAISRGD…AEHLSLLYPV (95 aa).

Interacts with PTPN11. Interacts with phosphorylated 'Tyr-720' of the ligand-activated receptor PDGFRA via its SH2 domain. Interacts with the ligand-activated receptors PDGFRB, FGFR1, KDR/VEGFR2, IL2RB and IL2RG. Interacts with EPS8 and V-SRC. Interacts with GRB2 and GRAP. Interacts with CD3Z. Interacts with tyrosine-phosphorylated LAT upon T-cell antigen receptor activation. Interacts with PLCG1. Interacts with ZAP70, LCP2/SLP-76, VAV1 and GRAP2. Interacts with JAK1 and JAK3. Interacts with PTK2/FAK1. Interacts with CRK/CrKII. Interacts with IRS2. Post-translationally, phosphorylated upon PDGFRA, PDGFRB, TCR, IL2 receptor, FGFR1 or VEGFR2 activation. Widely expressed.

It localises to the cytoplasm. The protein resides in the cell membrane. Functionally, adapter protein which regulates several signal transduction cascades by linking activated receptors to downstream signaling components. May play a role in angiogenesis by regulating FGFR1, VEGFR2 and PDGFR signaling. May also play a role in T-cell antigen receptor/TCR signaling, interleukin-2 signaling, apoptosis and neuronal cells differentiation by mediating basic-FGF and NGF-induced signaling cascades. May also regulate IRS1 and IRS2 signaling in insulin-producing cells. In Homo sapiens (Human), this protein is SH2 domain-containing adapter protein B (SHB).